The primary structure comprises 314 residues: Melanoma-associated antigen 2 (314 aa).

Basic and acidic residues predominate over residues 1–20 (MPLEQRSQHCKPEEGLEARG). The tract at residues 1–69 (MPLEQRSQHC…SPPHSPQGAS (69 aa)) is disordered. A compositionally biased stretch (low complexity) spans 21–44 (EALGLVGAQAPATEEQQTASSSST). Residue Ser-64 is modified to Phosphoserine. The region spanning 109–308 (ISRKMVELVH…ISYPPLHERA (200 aa)) is the MAGE domain.

As to quaternary structure, interacts with TRIM28 and UBE2H. Interacts with HDAC3. Interacts with PML (isoform PML-1, isoform PML-2, isoform PML-3, isoform PML-4 and isoform PML-5). In terms of tissue distribution, expressed in many tumors of several types, such as melanoma, head and neck squamous cell carcinoma, lung carcinoma and breast carcinoma, but not in normal tissues except for testes.

The protein localises to the nucleus. It localises to the PML body. Its function is as follows. Reduces p53/TP53 transactivation function through recruitment of HDAC3 to p53/TP53 transcription sites. Also represses p73/TP73 activity. Proposed to enhance ubiquitin ligase activity of RING-type zinc finger-containing E3 ubiquitin-protein ligases. In vitro enhances ubiquitin ligase activity of TRIM28 and stimulates p53/TP53 ubiquitination by TRIM28 potentially in presence of Ubl-conjugating enzyme UBE2H. Proposed to act through recruitment and/or stabilization of the Ubl-conjugating enzyme (E2) at the E3:substrate complex. May play a role in embryonal development and tumor transformation or aspects of tumor progression. In vitro promotes cell viability in melanoma cell lines. Antigen recognized on a melanoma by autologous cytolytic T-lymphocytes. Negatively regulates acetylation and sumoylation of PML and represses PML-induced p53/TP53 acetylation and activation. The chain is Melanoma-associated antigen 2 (MAGEA2) from Homo sapiens (Human).